We begin with the raw amino-acid sequence, 479 residues long: Glutamyl-tRNA reductase (479 aa).

Residues 48 to 51, serine 104, 109 to 111, and glutamine 115 contribute to the substrate site; these read TCNR and ERQ. The active-site Nucleophile is cysteine 49. 189–194 is an NADP(+) binding site; the sequence is GAGKMG. Residues 417–455 form a disordered region; the sequence is DAGRSLAEAPDADTPDLGEAPSRCPYMTHDPGGDGTETE.

This sequence belongs to the glutamyl-tRNA reductase family. Homodimer.

It catalyses the reaction (S)-4-amino-5-oxopentanoate + tRNA(Glu) + NADP(+) = L-glutamyl-tRNA(Glu) + NADPH + H(+). It functions in the pathway porphyrin-containing compound metabolism; protoporphyrin-IX biosynthesis; 5-aminolevulinate from L-glutamyl-tRNA(Glu): step 1/2. In terms of biological role, catalyzes the NADPH-dependent reduction of glutamyl-tRNA(Glu) to glutamate 1-semialdehyde (GSA). The sequence is that of Glutamyl-tRNA reductase from Salinibacter ruber (strain DSM 13855 / M31).